Here is a 322-residue protein sequence, read N- to C-terminus: Cytochrome c biogenesis protein CcsA (322 aa).

Transmembrane regions (helical) follow at residues 2–22 (LFAT…SIVI), 44–64 (GMIA…LSSG), 68–88 (LSNL…LHTI), 143–163 (MLLS…ILII), 226–246 (VISL…VWAN), 260–274 (TWAF…IYLH), and 289–309 (VASI…LLGI).

This sequence belongs to the CcmF/CycK/Ccl1/NrfE/CcsA family. May interact with Ccs1.

The protein localises to the plastid. It localises to the chloroplast thylakoid membrane. Required during biogenesis of c-type cytochromes (cytochrome c6 and cytochrome f) at the step of heme attachment. This chain is Cytochrome c biogenesis protein CcsA, found in Brachypodium distachyon (Purple false brome).